We begin with the raw amino-acid sequence, 192 residues long: NADH dehydrogenase [ubiquinone] iron-sulfur protein 3 (192 aa).

It belongs to the complex I 30 kDa subunit family. Complex I is composed of about 45 different subunits. This is a component of the iron-sulfur (IP) fragment of the enzyme.

The protein localises to the mitochondrion inner membrane. The catalysed reaction is a ubiquinone + NADH + 5 H(+)(in) = a ubiquinol + NAD(+) + 4 H(+)(out). In terms of biological role, core subunit of the mitochondrial membrane respiratory chain NADH dehydrogenase (Complex I) that is believed to belong to the minimal assembly required for catalysis. Complex I functions in the transfer of electrons from NADH to the respiratory chain. The immediate electron acceptor for the enzyme is believed to be ubiquinone. The protein is NADH dehydrogenase [ubiquinone] iron-sulfur protein 3 (NAD9) of Beta trigyna (Caucasian wild beet).